The primary structure comprises 487 residues: Iron-sulfur cluster assembly SufBD family protein ycf24 (487 aa).

The protein belongs to the iron-sulfur cluster assembly SufBD family.

It is found in the plastid. The protein resides in the chloroplast. This is Iron-sulfur cluster assembly SufBD family protein ycf24 (ycf24) from Pyropia yezoensis (Susabi-nori).